The chain runs to 360 residues: Cytokine receptor-like factor 2 (360 aa).

An N-terminal signal peptide occupies residues M1–G18. Over T27–P238 the chain is Extracellular. N-linked (GlcNAc...) asparagine glycosylation is present at N62. A disulfide bridge connects residues C77 and C90. Positions R123–L214 constitute a Fibronectin type-III domain. N-linked (GlcNAc...) asparagine glycans are attached at residues N129 and N174. Cysteines 185 and 223 form a disulfide. A WSXWS motif motif is present at residues P205 to T209. The chain crosses the membrane as a helical span at residues L239–L259. Over R260–L360 the chain is Cytoplasmic. A Box 1 motif motif is present at residues L268–R276.

This sequence belongs to the type I cytokine receptor family. Type 5 subfamily. In terms of assembly, heterodimer of CRLF2 and IL7R. In terms of tissue distribution, expressed in all tissues examined including brain, thymus, lung, heart, muscle, stomach, small intestine, liver, kidney, spleen, testis and skin. Highest levels in thymus, liver and testis.

The protein resides in the membrane. Receptor for thymic stromal lymphopoietin (TSLP). Forms a functional complex with TSLP and IL7R which is capable of stimulating cell proliferation through activation of STAT3 and STAT5. Also activates JAK2. Implicated in the development of the hematopoietic system. This is Cytokine receptor-like factor 2 (Crlf2) from Rattus norvegicus (Rat).